We begin with the raw amino-acid sequence, 207 residues long: GTP-binding protein Rheb homolog 1 (207 aa).

Positions 25, 26, 27, 42, 45, 126, 129, and 157 each coordinate GTP. Mg(2+) is bound at residue serine 27. The Effector region signature appears at 42-50 (YESTIEDQH). Position 45 (threonine 45) interacts with Mg(2+). Over residues 180-193 (NLSPTERPNGNSPK) the composition is skewed to polar residues. The tract at residues 180 to 207 (NLSPTERPNGNSPKRNPFKDDGKPCSIS) is disordered. Positions 196 to 207 (PFKDDGKPCSIS) are enriched in basic and acidic residues. Cysteine 204 bears the Cysteine methyl ester mark. A lipid anchor (S-farnesyl cysteine) is attached at cysteine 204. Positions 205 to 207 (SIS) are cleaved as a propeptide — removed in mature form.

It belongs to the small GTPase superfamily. Rheb family.

Its subcellular location is the cell membrane. It carries out the reaction GTP + H2O = GDP + phosphate + H(+). Its function is as follows. Binds GTP and exhibits intrinsic GTPase activity. This chain is GTP-binding protein Rheb homolog 1 (rheb-1), found in Caenorhabditis elegans.